A 401-amino-acid polypeptide reads, in one-letter code: Exodeoxyribonuclease 7 large subunit (401 aa).

Belongs to the XseA family. As to quaternary structure, heterooligomer composed of large and small subunits.

Its subcellular location is the cytoplasm. The enzyme catalyses Exonucleolytic cleavage in either 5'- to 3'- or 3'- to 5'-direction to yield nucleoside 5'-phosphates.. Bidirectionally degrades single-stranded DNA into large acid-insoluble oligonucleotides, which are then degraded further into small acid-soluble oligonucleotides. This chain is Exodeoxyribonuclease 7 large subunit, found in Clostridium botulinum (strain Hall / ATCC 3502 / NCTC 13319 / Type A).